Reading from the N-terminus, the 906-residue chain is Protein kintoun (906 aa).

Position 376 is a phosphoserine (serine 376). Disordered regions lie at residues 614-691 (QQQK…RKQR) and 793-906 (RKKN…DEDM). The segment covering 618-631 (KLNKKQRKRNKKQR) has biased composition (basic residues). The segment covering 639–655 (EELKAAQEELQLQHEKQ) has biased composition (basic and acidic residues). A compositionally biased stretch (basic residues) spans 793–808 (RKKNQKRRDCKLRAQQ). Serine 812 carries the post-translational modification Phosphoserine. The segment covering 837-850 (ANAQYFKQPNNNNG) has biased composition (polar residues). 2 stretches are compositionally biased toward basic and acidic residues: residues 851–865 (HDQDKNKKLSMHDSG) and 875–887 (NNEEETKRNEADA). Acidic residues predominate over residues 894 to 906 (EMDDDDEDEDEDM).

This sequence belongs to the PIH1 family. Kintoun subfamily. Interacts with Pp1alpha-96A, Pp1-87B, Pp1-13C and flw.

It is found in the cytoplasm. In terms of biological role, required for cytoplasmic pre-assembly of axonemal dyneins, thereby playing a central role in motility in cilia and flagella. Involved in pre-assembly of dynein arm complexes in the cytoplasm before intraflagellar transport loads them for the ciliary compartment. The polypeptide is Protein kintoun (Drosophila virilis (Fruit fly)).